We begin with the raw amino-acid sequence, 195 residues long: Peptidyl-tRNA hydrolase (195 aa).

Tyrosine 17 provides a ligand contact to tRNA. Residue histidine 22 is the Proton acceptor of the active site. TRNA contacts are provided by tyrosine 68, asparagine 70, and asparagine 116.

Belongs to the PTH family. In terms of assembly, monomer.

The protein localises to the cytoplasm. It carries out the reaction an N-acyl-L-alpha-aminoacyl-tRNA + H2O = an N-acyl-L-amino acid + a tRNA + H(+). In terms of biological role, hydrolyzes ribosome-free peptidyl-tRNAs (with 1 or more amino acids incorporated), which drop off the ribosome during protein synthesis, or as a result of ribosome stalling. Catalyzes the release of premature peptidyl moieties from peptidyl-tRNA molecules trapped in stalled 50S ribosomal subunits, and thus maintains levels of free tRNAs and 50S ribosomes. The chain is Peptidyl-tRNA hydrolase from Shewanella putrefaciens (strain CN-32 / ATCC BAA-453).